We begin with the raw amino-acid sequence, 672 residues long: Spermatid perinuclear RNA-binding protein (672 aa).

Residues 5 to 363 (RSFANDDRHV…ALKRPFEDGL (359 aa)) form the DZF domain. 2 disordered regions span residues 52–73 (TNKGTKTEGETEVKKDEAGENY) and 349–371 (GAGSSALKRPFEDGLGDDKDPNK). Basic and acidic residues predominate over residues 357 to 371 (RPFEDGLGDDKDPNK). Residues 387–453 (DLMNALMRLN…AVKVLQAMGY (67 aa)) enclose the DRBM 1 domain. Over residues 466–476 (SDEKSDNESKN) the composition is skewed to basic and acidic residues. The disordered stretch occupies residues 466–499 (SDEKSDNESKNETVSSNSSNNTGNSTTETSSTLE). Residues 477–497 (ETVSSNSSNNTGNSTTETSST) are compositionally biased toward low complexity. Positions 510 to 576 (SGKNPVMELN…ALAALEKLFS (67 aa)) constitute a DRBM 2 domain. R612 and R617 each carry asymmetric dimethylarginine.

Interacts with EIF2AK2. Associates with microtubules; it is unsure whether such interaction is direct or indirect.

The protein localises to the cytoplasm. In terms of biological role, involved in spermatogenesis and sperm function. Plays a role in regulation of cell growth. Binds to double-stranded DNA and RNA. Binds most efficiently to poly(I:C) RNA than to poly(dI:dC) DNA. Binds also to single-stranded poly(G) RNA. Binds non-specifically to the mRNA PRM1 3'-UTR and adenovirus VA RNA. This chain is Spermatid perinuclear RNA-binding protein (STRBP), found in Homo sapiens (Human).